Here is a 203-residue protein sequence, read N- to C-terminus: Recombination protein RecR (203 aa).

A C4-type zinc finger spans residues 56–71 (CAVCGNVSDNERCRIC). The 101-residue stretch at 79 to 179 (SVVCIVEEPK…TVTRIASGLP (101 aa)) folds into the Toprim domain.

This sequence belongs to the RecR family.

Its function is as follows. May play a role in DNA repair. It seems to be involved in an RecBC-independent recombinational process of DNA repair. It may act with RecF and RecO. This is Recombination protein RecR from Mycobacterium bovis (strain ATCC BAA-935 / AF2122/97).